Here is a 31-residue protein sequence, read N- to C-terminus: Nemertide alpha-2 (31 aa).

Intrachain disulfides connect Cys-2–Cys-16, Cys-9–Cys-20, and Cys-15–Cys-26. 4-hydroxyproline is present on residues Pro-28 and Pro-29.

Belongs to the nemertide family. Confined to the epidermis and to the mucus layer.

It localises to the secreted. Toxin with similar potency against both insect and mammalian sodium channels (Nav). Delays the inactivation of most Nav channels tested (B.germanica (BgNav1); EC(50)=87.2 nM, human Nav1.1/SCN1A; EC(50)=125.8 nM, rat Nav1.2/SCN2A; EC(50)=97.9 nM, rat Nav1.3/SCN3A; EC(50)=127.7 nM, rat Nav1.4/SCN4A; EC(50)=1150.3 nM, human Nav1.5/SCN5A; EC(50)=149.2 nM, mouse Nav1.6/SCN8A; EC(50)=1361.8 nM, human Nav1.9/SCN9A; EC(50)=1296.7 nM). Inactivation is completely prevented by a concentration of 1 uM, resulting in sustained, non-inactivating current. In addition, the toxin significantly enhances the recovery from inactivation, and the open state is not required for the toxin to interact with the channel. In vivo, injection into brine shrimp (Artemia salina) stops movement or causes death after 24 hours (EC(50)=2.9 uM). This Lineus longissimus (Bootlace worm) protein is Nemertide alpha-2.